The chain runs to 175 residues: NADH dehydrogenase [ubiquinone] iron-sulfur protein 4, mitochondrial (175 aa).

A mitochondrion-targeting transit peptide spans 1-42 (MAAVSMSVVLRQTLWRRRAVAVAALSVSRVPTRSLRTSTWRL). Residues 151–175 (KVPKPKSKSYGANFSWNKRTRVSTK) form a disordered region. The residue at position 173 (Ser173) is a Phosphoserine; by PKA.

The protein belongs to the complex I NDUFS4 subunit family. In terms of assembly, mammalian complex I is composed of 45 different subunits. This is a component of the iron-sulfur (IP) fragment of the enzyme. Interacts with BCAP31 and TOMM40; the interaction mediates its translocation to the mitochondria; the interaction with BCAP31 is direct.

The protein localises to the mitochondrion inner membrane. Its function is as follows. Accessory subunit of the mitochondrial membrane respiratory chain NADH dehydrogenase (Complex I), that is believed not to be involved in catalysis. Complex I functions in the transfer of electrons from NADH to the respiratory chain. The immediate electron acceptor for the enzyme is believed to be ubiquinone. The sequence is that of NADH dehydrogenase [ubiquinone] iron-sulfur protein 4, mitochondrial (NDUFS4) from Homo sapiens (Human).